Reading from the N-terminus, the 537-residue chain is 2-succinyl-5-enolpyruvyl-6-hydroxy-3-cyclohexene-1-carboxylate synthase (537 aa).

The protein belongs to the TPP enzyme family. MenD subfamily. In terms of assembly, homodimer. Mg(2+) is required as a cofactor. It depends on Mn(2+) as a cofactor. Thiamine diphosphate serves as cofactor.

The enzyme catalyses isochorismate + 2-oxoglutarate + H(+) = 5-enolpyruvoyl-6-hydroxy-2-succinyl-cyclohex-3-ene-1-carboxylate + CO2. The protein operates within quinol/quinone metabolism; 1,4-dihydroxy-2-naphthoate biosynthesis; 1,4-dihydroxy-2-naphthoate from chorismate: step 2/7. It functions in the pathway quinol/quinone metabolism; menaquinone biosynthesis. Its function is as follows. Catalyzes the thiamine diphosphate-dependent decarboxylation of 2-oxoglutarate and the subsequent addition of the resulting succinic semialdehyde-thiamine pyrophosphate anion to isochorismate to yield 2-succinyl-5-enolpyruvyl-6-hydroxy-3-cyclohexene-1-carboxylate (SEPHCHC). The protein is 2-succinyl-5-enolpyruvyl-6-hydroxy-3-cyclohexene-1-carboxylate synthase of Nocardioides sp. (strain ATCC BAA-499 / JS614).